We begin with the raw amino-acid sequence, 224 residues long: MSIRDWPAAERPRERLLEQGAISLSDAELLAIFLRTGVAGKSAVDLARHLLRRFGSLRRLLEADQLTFTRQLGLGPAKYALLQAVLEMARRHLAEKLHRQSALENPLVVRDYLKSMLRHEPHEVFGCLFLDTRHRVLTFEVLFQGSIDSTTVYPRQVIKRALAHNAAAVILCHNHPSGICEPSPADRVVTRRLQEALELIDVRVLDHFIVGEGDPLSMAEYGWI.

The region spanning 102–224 (ALENPLVVRD…PLSMAEYGWI (123 aa)) is the MPN domain. Positions 173, 175, and 186 each coordinate Zn(2+). The JAMM motif motif lies at 173 to 186 (HNHPSGICEPSPAD).

This sequence belongs to the UPF0758 family.

The chain is UPF0758 protein PFL_6051 from Pseudomonas fluorescens (strain ATCC BAA-477 / NRRL B-23932 / Pf-5).